A 187-amino-acid polypeptide reads, in one-letter code: Signal peptidase I U (187 aa).

The Cytoplasmic portion of the chain corresponds to M1 to T16. Residues I17–Y37 traverse the membrane as a helical segment. Over K38–K187 the chain is Extracellular. Residues S46 and K88 contribute to the active site.

The protein belongs to the peptidase S26 family.

The protein localises to the cell membrane. It carries out the reaction Cleavage of hydrophobic, N-terminal signal or leader sequences from secreted and periplasmic proteins.. The sequence is that of Signal peptidase I U (sipU) from Bacillus subtilis (strain 168).